A 355-amino-acid chain; its full sequence is N6-mAMP deaminase (355 aa).

Residues His13 and His15 each contribute to the Zn(2+) site. N(6)-methyl-AMP contacts are provided by residues His15, Asn17, His65, Thr97–Lys100, Asp160, and Gly190. Residue His217 coordinates Zn(2+). Positions 220, 295, and 296 each coordinate N(6)-methyl-AMP. Catalysis depends on Glu220, which acts as the Proton donor. Asp295 serves as a coordination point for Zn(2+).

It belongs to the metallo-dependent hydrolases superfamily. Adenosine and AMP deaminases family. In terms of assembly, monomer. The cofactor is Zn(2+).

It is found in the cytoplasm. It localises to the cytosol. It catalyses the reaction N(6)-methyl-AMP + H2O + H(+) = IMP + methylamine. Catalyzes the hydrolysis of the free cytosolic methylated adenosine nucleotide N(6)-methyl-AMP (N6-mAMP) to produce inositol monophosphate (IMP) and methylamine. Is required for the catabolism of cytosolic N6-mAMP, which is derived from the degradation of mRNA containing N6-methylated adenine (m6A). Does not possess deaminase activity toward adenosine, AMP, N6-methyladenosine, or N6-mATP in vitro. The polypeptide is N6-mAMP deaminase (Arabidopsis thaliana (Mouse-ear cress)).